The chain runs to 662 residues: DNA ligase (662 aa).

NAD(+) contacts are provided by residues 31-35 (DKDYD) and 79-80 (SL). K121 serves as the catalytic N6-AMP-lysine intermediate. 3 residues coordinate NAD(+): R143, E177, and K313. Zn(2+)-binding residues include C406, C409, C422, and C428. Residues 586-662 (VLESPFMGKT…LSEEEFENMI (77 aa)) form the BRCT domain.

It belongs to the NAD-dependent DNA ligase family. LigA subfamily. Mg(2+) is required as a cofactor. It depends on Mn(2+) as a cofactor.

It catalyses the reaction NAD(+) + (deoxyribonucleotide)n-3'-hydroxyl + 5'-phospho-(deoxyribonucleotide)m = (deoxyribonucleotide)n+m + AMP + beta-nicotinamide D-nucleotide.. Its function is as follows. DNA ligase that catalyzes the formation of phosphodiester linkages between 5'-phosphoryl and 3'-hydroxyl groups in double-stranded DNA using NAD as a coenzyme and as the energy source for the reaction. It is essential for DNA replication and repair of damaged DNA. The chain is DNA ligase from Clostridium perfringens (strain 13 / Type A).